The sequence spans 208 residues: Probable GTP-binding protein EngB (208 aa).

The 183-residue stretch at 23–205 folds into the EngB-type G domain; it reads LTSEMVVLGR…RQTLLKYLLT (183 aa). Residues 31–38, 57–61, 84–87, 154–157, and 182–184 contribute to the GTP site; these read GRSNVGKS, GKTRL, DLPG, TKFD, and FNA. Mg(2+) is bound by residues Ser38 and Thr59.

Belongs to the TRAFAC class TrmE-Era-EngA-EngB-Septin-like GTPase superfamily. EngB GTPase family. The cofactor is Mg(2+).

Functionally, necessary for normal cell division and for the maintenance of normal septation. The sequence is that of Probable GTP-binding protein EngB from Helicobacter acinonychis (strain Sheeba).